The following is a 982-amino-acid chain: Hunchback-like protein (982 aa).

The disordered stretch occupies residues 87-194 (QPGEKIHPDG…SNYQVTSEPV (108 aa)). Residues 101–110 (PKEDGRKSSE) show a composition bias toward basic and acidic residues. The segment covering 111–132 (HTNSYDVSASQSPSNDGAQSDS) has biased composition (polar residues). A compositionally biased stretch (acidic residues) spans 142–152 (CMTETEMDTDE). Residues 153–175 (KDSTIKPEDQATPKLEEGSDSKP) show a composition bias toward basic and acidic residues. Residues 176-193 (ESTSVEGTSSNYQVTSEP) show a composition bias toward polar residues. 7 C2H2-type zinc fingers span residues 336-358 (LVCP…MNTH), 361-384 (HQCS…RESH), 538-560 (FKCK…ARTH), 567-589 (LNCQ…YRNH), 595-617 (FQCK…MKSH), 623-647 (FRCM…KYNH), and 734-756 (LKCS…SMSH). The segment at 377-415 (KKHMRESHTVEEQLRAGFESEPAKESASSPKNLSLSKDG) is disordered. Residues 811–896 (EEMDQGSDSA…PPLHSSSIVA (86 aa)) form a disordered region. Polar residues-rich tracts occupy residues 816–831 (GSDS…QISS) and 843–862 (SLEQ…SNDS). The segment covering 863-875 (AMEKDGESADDAP) has biased composition (basic and acidic residues). C2H2-type zinc fingers lie at residues 929–951 (FYCD…MRFH) and 957–981 (FMCS…QARH).

The protein belongs to the hunchback C2H2-type zinc-finger protein family. As to expression, expressed primarily in ectodermal cells during embryonic and larval development.

The protein resides in the nucleus. Required for the late stages of development. Plays a role in the developmental timing of postembryonic hypodermal seam cell fusion events and adult alae production. This chain is Hunchback-like protein, found in Caenorhabditis elegans.